The sequence spans 514 residues: Variant surface glycoprotein ILTAT 1.24 (514 aa).

The first 23 residues, 1–23 (MVYRNILQLSVLKVLLIVLIVEA), serve as a signal peptide directing secretion. Intrachain disulfides connect cysteine 37–cysteine 162 and cysteine 143–cysteine 204. Residue asparagine 443 is glycosylated (N-linked (GlcNAc...) asparagine). The disordered stretch occupies residues 451-476 (GVPVTQTQTAGADTTAEKCKGKGEKD). Positions 455–464 (TQTQTAGADT) are enriched in low complexity. Basic and acidic residues predominate over residues 465–476 (TAEKCKGKGEKD). Aspartate 491 is lipidated: GPI-anchor amidated aspartate. Positions 492-514 (SSILANKQFALSVASAAFVALLF) are cleaved as a propeptide — removed in mature form.

The protein localises to the cell membrane. VSG forms a coat on the surface of the parasite. The trypanosome evades the immune response of the host by expressing a series of antigenically distinct VSGs from an estimated 1000 VSG genes. The chain is Variant surface glycoprotein ILTAT 1.24 from Trypanosoma brucei brucei.